Reading from the N-terminus, the 1111-residue chain is Cellulose synthase-like protein D4 (1111 aa).

2 disordered regions span residues Met1–Arg26 and Asp175–Arg202. Residues Gly192–Arg202 show a composition bias toward polar residues. 2 helical membrane-spanning segments follow: residues Ala266–Leu286 and Ala297–Leu317. Active-site residues include Asp397 and Asp809. Helical transmembrane passes span Leu891–Val911, Leu914–Val934, Leu963–Leu983, Leu1007–Ile1027, Leu1040–Gly1060, and Thr1070–Ile1090.

The protein belongs to the glycosyltransferase 2 family. Plant cellulose synthase-like D subfamily.

Its subcellular location is the golgi apparatus membrane. Thought to be a Golgi-localized beta-glycan synthase that polymerize the backbones of noncellulosic polysaccharides (hemicelluloses) of plant cell wall. The chain is Cellulose synthase-like protein D4 (CSLD4) from Arabidopsis thaliana (Mouse-ear cress).